The primary structure comprises 224 residues: tRNA (guanine-N(7)-)-methyltransferase (224 aa).

Positions 54, 79, 106, and 129 each coordinate S-adenosyl-L-methionine. The active site involves D129. Positions 133 and 165 each coordinate substrate.

Belongs to the class I-like SAM-binding methyltransferase superfamily. TrmB family.

The enzyme catalyses guanosine(46) in tRNA + S-adenosyl-L-methionine = N(7)-methylguanosine(46) in tRNA + S-adenosyl-L-homocysteine. It participates in tRNA modification; N(7)-methylguanine-tRNA biosynthesis. Its function is as follows. Catalyzes the formation of N(7)-methylguanine at position 46 (m7G46) in tRNA. In Chlamydia abortus (strain DSM 27085 / S26/3) (Chlamydophila abortus), this protein is tRNA (guanine-N(7)-)-methyltransferase.